The following is a 403-amino-acid chain: Argininosuccinate synthase (403 aa).

ATP-binding positions include 10–18 (AYSGGVDTS) and Ala38. Tyr89 is an L-citrulline binding site. Gly119 is an ATP binding site. Positions 121, 125, and 126 each coordinate L-aspartate. Asn125 serves as a coordination point for L-citrulline. 5 residues coordinate L-citrulline: Arg129, Ser177, Ser186, Glu262, and Tyr274.

It belongs to the argininosuccinate synthase family. Type 1 subfamily. Homotetramer.

Its subcellular location is the cytoplasm. The enzyme catalyses L-citrulline + L-aspartate + ATP = 2-(N(omega)-L-arginino)succinate + AMP + diphosphate + H(+). Its pathway is amino-acid biosynthesis; L-arginine biosynthesis; L-arginine from L-ornithine and carbamoyl phosphate: step 2/3. The polypeptide is Argininosuccinate synthase (Synechococcus sp. (strain CC9902)).